Here is a 507-residue protein sequence, read N- to C-terminus: Histidine ammonia-lyase (507 aa).

Positions 140–142 (ASG) form a cross-link, 5-imidazolinone (Ala-Gly). 2,3-didehydroalanine (Ser) is present on Ser141.

The protein belongs to the PAL/histidase family. Contains an active site 4-methylidene-imidazol-5-one (MIO), which is formed autocatalytically by cyclization and dehydration of residues Ala-Ser-Gly.

The protein localises to the cytoplasm. The enzyme catalyses L-histidine = trans-urocanate + NH4(+). It functions in the pathway amino-acid degradation; L-histidine degradation into L-glutamate; N-formimidoyl-L-glutamate from L-histidine: step 1/3. The sequence is that of Histidine ammonia-lyase from Yersinia enterocolitica serotype O:8 / biotype 1B (strain NCTC 13174 / 8081).